The following is a 201-amino-acid chain: MELVLKDAQSALTVSETTFGRDFNEALVHQVVVAYAAGARQGTRAQKTRAEVTGSGKKPWRQKGTGRARAGSVKSPIWRSGGVTFAAKSQDHSQKVNKKMYRGALKSILSELVRQDRLIVVEQFSLEAPKTKLLAEKLKDMALEDVLIITGELEENLFLAARNLYKVDVRDAAGIDPVSLIAFDKVVMTADAVKQVEEMLA.

The segment at 51–73 (EVTGSGKKPWRQKGTGRARAGSV) is disordered.

Belongs to the universal ribosomal protein uL4 family. As to quaternary structure, part of the 50S ribosomal subunit.

In terms of biological role, one of the primary rRNA binding proteins, this protein initially binds near the 5'-end of the 23S rRNA. It is important during the early stages of 50S assembly. It makes multiple contacts with different domains of the 23S rRNA in the assembled 50S subunit and ribosome. Forms part of the polypeptide exit tunnel. The protein is Large ribosomal subunit protein uL4 of Erwinia tasmaniensis (strain DSM 17950 / CFBP 7177 / CIP 109463 / NCPPB 4357 / Et1/99).